We begin with the raw amino-acid sequence, 561 residues long: (+)-alpha-pinene synthase TPS2FN (561 aa).

Residues R276, D313, D317, R455, and D458 each contribute to the (2E)-geranyl diphosphate site. The Mg(2+) site is built by D313 and D317. Positions 313-317 (DDIYD) match the DDXXD motif motif. Mg(2+) is bound by residues D458, T462, and E466.

This sequence belongs to the terpene synthase family. Tpsb subfamily. Mg(2+) serves as cofactor. It depends on Mn(2+) as a cofactor. Expressed in glandular trichomes two to four weeks after flowering onset.

It catalyses the reaction (2E)-geranyl diphosphate = (1R,5R)-alpha-pinene + diphosphate. It carries out the reaction (2E)-geranyl diphosphate = (4S)-limonene + diphosphate. The catalysed reaction is (2E)-geranyl diphosphate = sabinene + diphosphate. The enzyme catalyses (2E)-geranyl diphosphate = beta-phellandrene + diphosphate. It catalyses the reaction (2E)-geranyl diphosphate = camphene + diphosphate. It carries out the reaction (2E)-geranyl diphosphate = isoterpinolene + diphosphate. Its pathway is secondary metabolite biosynthesis; terpenoid biosynthesis. It functions in the pathway terpene metabolism; (-)-alpha-pinene biosynthesis; (-)-alpha-pinene from geranyl diphosphate: step 1/1. Involved in monoterpene (C10) olefins biosynthesis, constituants of cannabinoids and terpenoids-rich resins. Catalyzes mainly the conversion of (2E)-geranyl diphosphate to (+)-alpha-pinene, and also produces minor products such as camphene, sabinene, beta-phellandrene, (-)-limonene and isoterpinolene. In Cannabis sativa (Hemp), this protein is (+)-alpha-pinene synthase TPS2FN.